Here is a 145-residue protein sequence, read N- to C-terminus: SsrA-binding protein (145 aa).

This sequence belongs to the SmpB family.

The protein resides in the cytoplasm. Its function is as follows. Required for rescue of stalled ribosomes mediated by trans-translation. Binds to transfer-messenger RNA (tmRNA), required for stable association of tmRNA with ribosomes. tmRNA and SmpB together mimic tRNA shape, replacing the anticodon stem-loop with SmpB. tmRNA is encoded by the ssrA gene; the 2 termini fold to resemble tRNA(Ala) and it encodes a 'tag peptide', a short internal open reading frame. During trans-translation Ala-aminoacylated tmRNA acts like a tRNA, entering the A-site of stalled ribosomes, displacing the stalled mRNA. The ribosome then switches to translate the ORF on the tmRNA; the nascent peptide is terminated with the 'tag peptide' encoded by the tmRNA and targeted for degradation. The ribosome is freed to recommence translation, which seems to be the essential function of trans-translation. This Mycoplasmopsis pulmonis (strain UAB CTIP) (Mycoplasma pulmonis) protein is SsrA-binding protein.